A 522-amino-acid chain; its full sequence is uncharacterized protein (522 aa).

A compositionally biased stretch (low complexity) spans 1–11 (MSSITSRVSSR). The interval 1–20 (MSSITSRVSSRSSHELTEKK) is disordered. Helical transmembrane passes span 69–89 (VLWKIDLVMMPVMCITYMIQY), 116–136 (SMTTLFYAGYLVAQYPAAILM), 141–161 (LSYFIFCNVFLWSAMVCLMAA), 173–193 (FLAGIFEASITPAFINITAMW), 204–224 (LCWYAFNGIAQIIGSILSYGL), 236–256 (YVFIVIGLMSLGWGVVFVFIP), 303–323 (VIMITLFTGVCMITNGIGVFS), 338–358 (AVLNMPLGAIEVAAMFISGVL), 367–387 (LLIGVFMNCLTLAGCLMIWKI), 396–416 (LVGVWFTMWVPASSALLLSLI), 428–448 (VTSATVFVFYSVGNIVSPQLF), and 462–482 (AMIVSLCIIIAIAFVLTGYYI).

Belongs to the major facilitator superfamily. Allantoate permease family.

Its subcellular location is the endoplasmic reticulum. The protein localises to the membrane. This is an uncharacterized protein from Schizosaccharomyces pombe (strain 972 / ATCC 24843) (Fission yeast).